The chain runs to 107 residues: Class I hydrophobin hgfI (107 aa).

The first 24 residues, 1-24, serve as a signal peptide directing secretion; the sequence is MFSKLAIFATAAFAVLAAATPVRR. 4 cysteine pairs are disulfide-bonded: C27-C88, C34-C82, C35-C68, and C89-C102.

It belongs to the fungal hydrophobin family. In terms of assembly, self-assembles to form functional amyloid fibrils called rodlets with a length range 100-150 nm. Self-assembly into fibrillar rodlets occurs spontaneously at hydrophobic:hydrophilic interfaces and the rodlets further associate laterally to form amphipathic monolayers. Only weekly expressed in hyphae cultured in liquid medium.

The protein localises to the secreted. It localises to the cell wall. Functionally, aerial growth, conidiation, and dispersal of filamentous fungi in the environment rely upon a capability of their secreting small amphipathic proteins called hydrophobins (HPBs) with low sequence identity. Class I can self-assemble into an outermost layer of rodlet bundles on aerial cell surfaces, conferring cellular hydrophobicity that supports fungal growth, development and dispersal; whereas Class II form highly ordered films at water-air interfaces through intermolecular interactions but contribute nothing to the rodlet structure. HgfI is a class I hydrophobin that is involved in cell surface hydrophobicity and lowers the surface tension of water and change the nature of the surfaces to which it adsorbs. This chain is Class I hydrophobin hgfI, found in Grifola frondosa (Maitake).